The chain runs to 306 residues: tRNA dimethylallyltransferase 1 (306 aa).

Residue 15 to 22 coordinates ATP; the sequence is GPTGSGKS. 17 to 22 contacts substrate; that stretch reads TGSGKS. Residues 40 to 43 are interaction with substrate tRNA; that stretch reads DSMQ.

It belongs to the IPP transferase family. In terms of assembly, monomer. It depends on Mg(2+) as a cofactor.

The catalysed reaction is adenosine(37) in tRNA + dimethylallyl diphosphate = N(6)-dimethylallyladenosine(37) in tRNA + diphosphate. Functionally, catalyzes the transfer of a dimethylallyl group onto the adenine at position 37 in tRNAs that read codons beginning with uridine, leading to the formation of N6-(dimethylallyl)adenosine (i(6)A). The sequence is that of tRNA dimethylallyltransferase 1 from Citrifermentans bemidjiense (strain ATCC BAA-1014 / DSM 16622 / JCM 12645 / Bem) (Geobacter bemidjiensis).